The sequence spans 476 residues: 3-isopropylmalate dehydratase large subunit (476 aa).

Positions 357, 417, and 420 each coordinate [4Fe-4S] cluster.

This sequence belongs to the aconitase/IPM isomerase family. LeuC type 1 subfamily. Heterodimer of LeuC and LeuD. The cofactor is [4Fe-4S] cluster.

It carries out the reaction (2R,3S)-3-isopropylmalate = (2S)-2-isopropylmalate. Its pathway is amino-acid biosynthesis; L-leucine biosynthesis; L-leucine from 3-methyl-2-oxobutanoate: step 2/4. Catalyzes the isomerization between 2-isopropylmalate and 3-isopropylmalate, via the formation of 2-isopropylmaleate. The chain is 3-isopropylmalate dehydratase large subunit from Mycolicibacterium paratuberculosis (strain ATCC BAA-968 / K-10) (Mycobacterium paratuberculosis).